The sequence spans 99 residues: Large ribosomal subunit protein uL23 (99 aa).

Belongs to the universal ribosomal protein uL23 family. Part of the 50S ribosomal subunit. Contacts protein L29, and trigger factor when it is bound to the ribosome.

One of the early assembly proteins it binds 23S rRNA. One of the proteins that surrounds the polypeptide exit tunnel on the outside of the ribosome. Forms the main docking site for trigger factor binding to the ribosome. The sequence is that of Large ribosomal subunit protein uL23 from Ectopseudomonas mendocina (strain ymp) (Pseudomonas mendocina).